We begin with the raw amino-acid sequence, 296 residues long: Vacuolar histidine transporter YPQ3 (296 aa).

The Vacuolar portion of the chain corresponds to 1–12 (MKLIPIILNAKN). Positions 10–76 (AKNLSGMAGS…QNLLPTMIIL (67 aa)) constitute a PQ-loop 1 domain. A helical membrane pass occupies residues 13 to 33 (LSGMAGSISICCWIVVFVPQI). The Cytoplasmic segment spans residues 34–44 (YENFRRQSAEG). The helical transmembrane segment at 45-65 (LSLLFIVLWLLGDIFNVMGAM) threads the bilayer. Topologically, residues 66–68 (MQN) are vacuolar. The chain crosses the membrane as a helical span at residues 69-89 (LLPTMIILAAYYTLADLILLI). Residues 90 to 163 (QCMWYDKEKK…RTIVVKEREN (74 aa)) are Cytoplasmic-facing. The helical transmembrane segment at 164-184 (FFNDFLIVSGVLIAGILSWYI) threads the bilayer. Topologically, residues 185 to 199 (SYCSGLDNGIPKKKP) are vacuolar. The chain crosses the membrane as a helical span at residues 200–220 (AFEQINLPAQILGYLSAILYL). The PQ-loop 2 domain occupies 208–270 (AQILGYLSAI…ASWLIGSAGT (63 aa)). Residues 221-238 (GSRIPQIVLNFKRKSCEG) lie on the Cytoplasmic side of the membrane. The helical transmembrane segment at 239–259 (VSFLFFLFACLGNTSFIISVL) threads the bilayer. The Vacuolar segment spans residues 260–262 (SAS). The helical transmembrane segment at 263-283 (WLIGSAGTLLMDFTVFIQFFL) threads the bilayer. Over 284–296 (YAKPKYEKILIDN) the chain is Cytoplasmic.

The protein belongs to the laat-1 family.

The protein resides in the vacuole membrane. It is found in the mitochondrion membrane. Amino acid transporter that moves histidine into the vacuole. May also contribute to low affinity arginine import into the vacuole. May function as an amino acid/proton antiporter. The polypeptide is Vacuolar histidine transporter YPQ3 (Saccharomyces cerevisiae (strain ATCC 204508 / S288c) (Baker's yeast)).